Reading from the N-terminus, the 721-residue chain is Sodium/hydrogen exchanger 6 (721 aa).

The segment at 1–44 (MTSPKPWARSAGSCQTQRAVRTRKKECREEGESDTEKGPAASSA) is disordered. Residues 26 to 37 (ECREEGESDTEK) show a composition bias toward basic and acidic residues. The next 12 helical transmembrane spans lie at 91–111 (SANLLIFILLLTLTILTIWLF), 123–143 (GLAMIYGLLVGLVLRYGIHVP), 196–216 (VTFDPEVFFNILLPPIIFYAG), 231–251 (ILAYAFLGTAISCFVIGSIMY), 272–292 (CLLFGAIVSATDPVTVLAIFH), 298–318 (VELYALLFGESVLNDAVAIVL), 344–364 (IGIFLGIFSGSFAMGAATGVV), 388–412 (MSWSTFLLAEAWGFTGVVAVLFCGI), 434–454 (FELLNFLAENFIFSYMGLTLF), 456–476 (FQNHVFNPTFVVGAFIAIFLG), 499–519 (NFQHMMMFAGLRGAMAFALAI), and 535–555 (LLIVFFTVWVFGGGTTAMLSC).

Belongs to the monovalent cation:proton antiporter 1 (CPA1) transporter (TC 2.A.36) family. In terms of assembly, homodimer. Interacts with RACK1; regulates the distribution of SLC9A6 between endosomes and the plasma membrane. In terms of processing, ubiquitinated (in vitro). Post-translationally, glycosylated.

It is found in the endosome membrane. Its subcellular location is the recycling endosome membrane. The protein resides in the early endosome membrane. The protein localises to the late endosome membrane. It localises to the cell membrane. The enzyme catalyses Na(+)(in) + H(+)(out) = Na(+)(out) + H(+)(in). It catalyses the reaction K(+)(in) + H(+)(out) = K(+)(out) + H(+)(in). In terms of biological role, endosomal Na(+), K(+)/H(+) antiporter. Mediates the electroneutral exchange of endosomal luminal H(+) for a cytosolic Na(+) or K(+). By facilitating proton efflux, SLC9A6 counteracts the acidity generated by vacuolar (V)-ATPase, thereby limiting luminal acidification. Responsible for alkalizing and maintaining the endosomal pH, and consequently in, e.g., endosome maturation and trafficking of recycling endosomal cargo. Plays a critical role during neurodevelopment by regulating synaptic development and plasticity. Implicated in the maintenance of cell polarity in a manner that is dependent on its ability to modulate intravesicular pH. Regulates intracelular pH in some specialized cells, osteoclasts and stereocilia where this transporter localizes to the plasma membrane. This Rattus norvegicus (Rat) protein is Sodium/hydrogen exchanger 6.